Here is a 403-residue protein sequence, read N- to C-terminus: GPI-N-acetylgalactosamine transferase PGAP4 (403 aa).

Residues 1–22 are Cytoplasmic-facing; that stretch reads MSTSTSPAAMLLRRLRRLSWGS. Residues 23–43 form a helical membrane-spanning segment; that stretch reads TAVQLFILTVVTFGLLAPLAC. Residues 44 to 259 lie on the Lumenal side of the membrane; that stretch reads HRLLHSYFYL…RLQHYTNPEP (216 aa). A UDP-N-acetyl-alpha-D-galactosamine-binding site is contributed by valine 109. 2 disulfide bridges follow: cysteine 132–cysteine 136 and cysteine 144–cysteine 194. Residues 211 to 213 carry the DXD motif motif; it reads EDD. The helical transmembrane segment at 260–280 threads the bilayer; it reads MRILEWVGVGMLLGPLLTWIY. Residues 281–287 are Cytoplasmic-facing; sequence MRFASRP. A helical transmembrane segment spans residues 288-308; that stretch reads GFSWPVMLFFSLYSMGLVELV. The Lumenal portion of the chain corresponds to 309–403; the sequence is GRHYFLELRR…LRYNFHPSLL (95 aa). A disulfide bond links cysteine 332 and cysteine 333. Residues threonine 334, proline 335, and lysine 362 each coordinate UDP-N-acetyl-alpha-D-galactosamine.

It belongs to the PGAP4 family. Post-translationally, glycosylated.

The protein resides in the golgi apparatus membrane. Functionally, golgi-resident glycosylphosphatidylinositol (GPI)-N-acetylgalactosamine transferase that catalyzes the N-acetyl-beta-D-galactosamine transfer from an UDP-N-acetyl-alpha-D-galactosamine to the 4-OH-position of first mannose of the glycosylphosphatidylinositol (GPI) of a GPI-anchored protein (GPI-AP). This modification occurs after the fatty acid remodeling step of the GPI-anchor maturation. In Pongo abelii (Sumatran orangutan), this protein is GPI-N-acetylgalactosamine transferase PGAP4.